The sequence spans 336 residues: Anthranilate phosphoribosyltransferase (336 aa).

5-phospho-alpha-D-ribose 1-diphosphate is bound by residues glycine 82, 85–86 (GD), threonine 90, 92–95 (NIST), 110–118 (KHGNRFASG), and serine 122. Residue glycine 82 participates in anthranilate binding. Serine 94 is a Mg(2+) binding site. Asparagine 113 contributes to the anthranilate binding site. Arginine 168 serves as a coordination point for anthranilate. Mg(2+) contacts are provided by aspartate 227 and glutamate 228.

Belongs to the anthranilate phosphoribosyltransferase family. Homodimer. Requires Mg(2+) as cofactor.

The enzyme catalyses N-(5-phospho-beta-D-ribosyl)anthranilate + diphosphate = 5-phospho-alpha-D-ribose 1-diphosphate + anthranilate. Its pathway is amino-acid biosynthesis; L-tryptophan biosynthesis; L-tryptophan from chorismate: step 2/5. Its function is as follows. Catalyzes the transfer of the phosphoribosyl group of 5-phosphorylribose-1-pyrophosphate (PRPP) to anthranilate to yield N-(5'-phosphoribosyl)-anthranilate (PRA). The protein is Anthranilate phosphoribosyltransferase of Desulfitobacterium hafniense (strain Y51).